The primary structure comprises 97 residues: MENNISNVRIHLHRKCDVNEQDIYGKTALHYAYTKRNIDIIKILLKCPGIKICIKDNDDYTPVDLICSTISSYIASSLENKIDEVDKLGETPHYENG.

One copy of the ANK repeat lies at 24 to 54 (YGKTALHYAYTKRNIDIIKILLKCPGIKICI).

The chain is Putative ankyrin repeat protein RBE_0357 from Rickettsia bellii (strain RML369-C).